Reading from the N-terminus, the 134-residue chain is MKFSILPMIASAMAVSISYDPIYAADLSMGSVACSNGDHGLMAQYPTLGEVPGFPNVGGIPDIAGWDSPSCGTCWKVTIPNGNSIFIRGVDSGRGGFNVNPTAFTKLVGSTEAGRVDNVNYVQVDLSNCINGAN.

A signal peptide spans 1–14; that stretch reads MKFSILPMIASAMA. Residues 18–20 are binding of oligomers of N-acetylglucosamine (GlcNAc); that stretch reads SYD. Binding of N-acetylglucosamine tetramer (GlcNAc-4) regions lie at residues 31–43, 65–68, and 91–95; these read SVACSNGDHGLMA, GWDS, and DSGRG. Cystine bridges form between cysteine 34–cysteine 71 and cysteine 74–cysteine 129. The binding of oligomers of N-acetylglucosamine (GlcNAc) stretch occupies residues 113-116; the sequence is AGRV.

This sequence belongs to the cerato-platanin family. Monomer.

Its subcellular location is the secreted. The protein localises to the cell wall. In terms of biological role, phytotoxin which causes production of phytoalexin in platanus acerifolia, platanus occidentalis and platanus orientalis. Induces cell necrosis in tobacco leaves, and in callus cells and leaves of P.acerifolia. Induces reactive oxygen species (ROS) synthesis, nitric oxide (NO) production and mitogen-activated protein kinases (MAPKs) phosphorylation in the leaves of A.thaliana and P.acerifolia. Results in H(2)O(2) production on the epidermis around the stomata, rapid closure of the stomata, reduced photosynthetic and CO(2) assimilation rate, and an increase in a number of volatile organic compound (VOC) emission in A.thaliana leaves. Induces overexpression of genes related to salicylic acid- and ethylene-signaling, camalexin synthesis, ROS production and oxidative stress, and genes of various receptor kinases, and down-regulation of a number of jasmonic acid (JA)-signaling genes in A.thaliana leaves. Renders resistance against C.platani in A.thaliana and P.acerifolia. Renders localised resistance of A.thaliana against infection by virulent foliar pathogens B.cinerea and P.syringae pv. tomato. Binds cellulose analog carboxymethyl cellulose (CMC). Expansin-like protein with probable fungal and plant cell wall loosening activity based on its non-enzymatic cellulose weakening activity in vitro. Increases glucose production by cellulase after pre-incubation of cellulose with this protein. In contrast, according to PubMed:23512479, no synergistic effect with cellulases. May have a structural role in the fungal cell wall based on its ability to bind chitin, but does not bind beta-1,3-glucan. The polypeptide is Cerato-platanin (Ceratocystis fimbriata f. sp. platani).